The following is a 574-amino-acid chain: Optineurin (574 aa).

Residues 1 to 33 (MSHQPLSCLTEKGDSPTETTGNGPPTLAHPNLD) are disordered. Residues 38 to 170 (HELLQQMREL…VSELQLKLNS (133 aa)) adopt a coiled-coil conformation. Residues 58 to 209 (MKLNNQAMKG…GPIRTDSIDT (152 aa)) form an interaction with Rab8 region. An LIR motif is present at residues 176–181 (DSFVEI). Serine 177 bears the Phosphoserine; by TBK1 mark. Serine 198 is modified (phosphoserine). Positions 233–496 (CLREGNQKVE…ALQLAVLLKD (264 aa)) form a coiled coil. The span at 262 to 286 (AKDRSETETQTEEHKEQEKEEEKSP) shows a compositional bias: basic and acidic residues. The segment at 262 to 292 (AKDRSETETQTEEHKEQEKEEEKSPETVGSE) is disordered. Serine 336 is modified (phosphoserine). The interval 405 to 574 (KRRESEKVDK…LLIHVTDCII (170 aa)) is interaction with HD. An interaction with MYO6 region spans residues 406–515 (RRESEKVDKV…RQSLMEMQSR (110 aa)). The UBAN signature appears at 468–473 (DFHAER). Serine 521 bears the Phosphoserine mark. Residues 544 to 574 (QQNIPIHSCPKCGEVLPDIDTLLIHVTDCII) form a CCHC NOA-type zinc finger. The Zn(2+) site is built by cysteine 552, cysteine 555, histidine 568, and cysteine 572.

In terms of assembly, self-associates. Interacts with HD. Interacts with GTF3A. Interacts with MYO6. Interacts (via UBAN) with ubiquitinated TFRC. Interacts with GTP-bound Rab8 (RAB8A and/or RAB8B). Interacts with TBC1D17. Interacts with TBK1. Interacts with TRAF3. Binds to linear ubiquitin chains. Interacts with LC3 family members MAP1LC3A, MAP1LC3B, GABARAP, GABARAPL1 and GABARAPL2; OPTN phosphorylation increases the association (at least with MAP1LC3B). Interacts with RAB12; the interaction may be indirect. Interacts with TBK1; this interaction leads to the Golgi localization of TBK1 and its subsequent activation. Interacts with palmitoyltransferase ZDHHC17/HIP14; the interaction does not lead to palmitoylation of OPTN. Interacts with CYLD. Interacts with TOM1; the interaction is indirect and is mediated by MYO6, which acts as a bridge between TOM1 and OPTN. Interacts with USP12; the interaction is independent of USP12 deubiquitinase activity and may be involved in regulation of autophagic flux. In terms of processing, phosphorylated by TBK1, leading to restrict bacterial proliferation in case of infection. Present in aqueous humor of the eye (at protein level). Expressed in trabecular meshwork and astrocytes.

The protein resides in the cytoplasm. It is found in the perinuclear region. It localises to the golgi apparatus. The protein localises to the trans-Golgi network. Its subcellular location is the cytoplasmic vesicle. The protein resides in the autophagosome. It is found in the recycling endosome. Functionally, plays an important role in the maintenance of the Golgi complex, in membrane trafficking, in exocytosis, through its interaction with myosin VI and Rab8. Links myosin VI to the Golgi complex and plays an important role in Golgi ribbon formation. Negatively regulates the induction of IFNB in response to RNA virus infection. Plays a neuroprotective role in the eye and optic nerve. Probably part of the TNF-alpha signaling pathway that can shift the equilibrium toward induction of cell death. May act by regulating membrane trafficking and cellular morphogenesis via a complex that contains Rab8 and huntingtin (HD). Mediates the interaction of Rab8 with the probable GTPase-activating protein TBC1D17 during Rab8-mediated endocytic trafficking, such as that of transferrin receptor (TFRC/TfR); regulates Rab8 recruitment to tubules emanating from the endocytic recycling compartment. Autophagy receptor that interacts directly with both the cargo to become degraded and an autophagy modifier of the MAP1 LC3 family; targets ubiquitin-coated bacteria (xenophagy) and appears to function in the same pathway as SQSTM1 and CALCOCO2/NDP52. This chain is Optineurin (OPTN), found in Sus scrofa (Pig).